We begin with the raw amino-acid sequence, 398 residues long: Dual-specificity RNA methyltransferase RlmN (398 aa).

Residue glutamate 119 is the Proton acceptor of the active site. The Radical SAM core domain maps to 125–364; the sequence is EGDRATLCVS…TIVRKTRGDD (240 aa). Cysteine 132 and cysteine 369 are oxidised to a cystine. Residues cysteine 139, cysteine 143, and cysteine 146 each contribute to the [4Fe-4S] cluster site. S-adenosyl-L-methionine-binding positions include 193 to 194, serine 225, 247 to 249, and asparagine 326; these read GE and SLH. Cysteine 369 (S-methylcysteine intermediate) is an active-site residue.

The protein belongs to the radical SAM superfamily. RlmN family. The cofactor is [4Fe-4S] cluster.

It is found in the cytoplasm. The catalysed reaction is adenosine(2503) in 23S rRNA + 2 reduced [2Fe-2S]-[ferredoxin] + 2 S-adenosyl-L-methionine = 2-methyladenosine(2503) in 23S rRNA + 5'-deoxyadenosine + L-methionine + 2 oxidized [2Fe-2S]-[ferredoxin] + S-adenosyl-L-homocysteine. It catalyses the reaction adenosine(37) in tRNA + 2 reduced [2Fe-2S]-[ferredoxin] + 2 S-adenosyl-L-methionine = 2-methyladenosine(37) in tRNA + 5'-deoxyadenosine + L-methionine + 2 oxidized [2Fe-2S]-[ferredoxin] + S-adenosyl-L-homocysteine. Specifically methylates position 2 of adenine 2503 in 23S rRNA and position 2 of adenine 37 in tRNAs. m2A2503 modification seems to play a crucial role in the proofreading step occurring at the peptidyl transferase center and thus would serve to optimize ribosomal fidelity. The sequence is that of Dual-specificity RNA methyltransferase RlmN from Yersinia enterocolitica serotype O:8 / biotype 1B (strain NCTC 13174 / 8081).